Here is a 163-residue protein sequence, read N- to C-terminus: Glutathione peroxidase 2 (163 aa).

Residue Cys-36 is part of the active site.

Belongs to the glutathione peroxidase family.

It is found in the cytoplasm. The catalysed reaction is 2 glutathione + H2O2 = glutathione disulfide + 2 H2O. In terms of biological role, may constitute a glutathione peroxidase-like protective system against oxidative stresses. The protein is Glutathione peroxidase 2 (gpx-2) of Caenorhabditis elegans.